A 195-amino-acid chain; its full sequence is UDP-N-acetylbacillosamine N-acetyltransferase (195 aa).

Residues 13–15, 35–36, and G56 each bind substrate; these read SGH and DD. Catalysis depends on H125, which acts as the Proton acceptor. The acetyl-CoA site is built by H134, I155, and G173.

The protein belongs to the transferase hexapeptide repeat family. Homotrimer.

It catalyses the reaction UDP-N-acetylbacillosamine + acetyl-CoA = UDP-N,N'-diacetylbacillosamine + CoA + H(+). The protein operates within protein modification; protein glycosylation. Its function is as follows. Acetyltransferase that modifies the UDP-4-amino-sugar to form UDP-N,N'-diacetylbacillosamine in the N-linked protein glycosylation pathway. The polypeptide is UDP-N-acetylbacillosamine N-acetyltransferase (pglD) (Campylobacter jejuni subsp. jejuni serotype O:2 (strain ATCC 700819 / NCTC 11168)).